Here is a 97-residue protein sequence, read N- to C-terminus: Small ribosomal subunit protein bS6 (97 aa).

The protein belongs to the bacterial ribosomal protein bS6 family.

Functionally, binds together with bS18 to 16S ribosomal RNA. This is Small ribosomal subunit protein bS6 from Syntrophomonas wolfei subsp. wolfei (strain DSM 2245B / Goettingen).